Reading from the N-terminus, the 232-residue chain is Putative N-acetylmannosamine-6-phosphate 2-epimerase (232 aa).

It belongs to the NanE family.

The enzyme catalyses an N-acyl-D-glucosamine 6-phosphate = an N-acyl-D-mannosamine 6-phosphate. It functions in the pathway amino-sugar metabolism; N-acetylneuraminate degradation; D-fructose 6-phosphate from N-acetylneuraminate: step 3/5. Its function is as follows. Converts N-acetylmannosamine-6-phosphate (ManNAc-6-P) to N-acetylglucosamine-6-phosphate (GlcNAc-6-P). The polypeptide is Putative N-acetylmannosamine-6-phosphate 2-epimerase (Proteus mirabilis (strain HI4320)).